A 372-amino-acid chain; its full sequence is Cobalt-precorrin-5B C(1)-methyltransferase (372 aa).

Belongs to the CbiD family.

The enzyme catalyses Co-precorrin-5B + S-adenosyl-L-methionine = Co-precorrin-6A + S-adenosyl-L-homocysteine. The protein operates within cofactor biosynthesis; adenosylcobalamin biosynthesis; cob(II)yrinate a,c-diamide from sirohydrochlorin (anaerobic route): step 6/10. Its function is as follows. Catalyzes the methylation of C-1 in cobalt-precorrin-5B to form cobalt-precorrin-6A. The sequence is that of Cobalt-precorrin-5B C(1)-methyltransferase from Prochlorococcus marinus subsp. pastoris (strain CCMP1986 / NIES-2087 / MED4).